Here is a 696-residue protein sequence, read N- to C-terminus: Gametogenetin-binding protein 2 (696 aa).

2 positions are modified to phosphoserine: Ser360 and Ser602.

As to quaternary structure, interacts with isoform 1 of GGN. In terms of tissue distribution, testis-specific.

It localises to the cytoplasmic vesicle. In terms of biological role, may be involved in spermatogenesis. This chain is Gametogenetin-binding protein 2 (Ggnbp2), found in Mus musculus (Mouse).